Reading from the N-terminus, the 360-residue chain is DNA replication and repair protein RecF (360 aa).

30–37 (GHNGSGKT) provides a ligand contact to ATP.

This sequence belongs to the RecF family.

It localises to the cytoplasm. Functionally, the RecF protein is involved in DNA metabolism; it is required for DNA replication and normal SOS inducibility. RecF binds preferentially to single-stranded, linear DNA. It also seems to bind ATP. This chain is DNA replication and repair protein RecF, found in Shewanella amazonensis (strain ATCC BAA-1098 / SB2B).